Here is a 375-residue protein sequence, read N- to C-terminus: tRNA-specific 2-thiouridylase MnmA (375 aa).

Residues 12 to 19 and Met-38 each bind ATP; that span reads GMSGGVDS. The interval 98-100 is interaction with target base in tRNA; sequence NPD. Cys-103 serves as the catalytic Nucleophile. A disulfide bridge connects residues Cys-103 and Cys-200. Gly-127 contacts ATP. The segment at 150–152 is interaction with tRNA; sequence KDQ. Cys-200 functions as the Cysteine persulfide intermediate in the catalytic mechanism. Residues 312 to 313 are interaction with tRNA; the sequence is RY.

This sequence belongs to the MnmA/TRMU family.

It localises to the cytoplasm. It catalyses the reaction S-sulfanyl-L-cysteinyl-[protein] + uridine(34) in tRNA + AH2 + ATP = 2-thiouridine(34) in tRNA + L-cysteinyl-[protein] + A + AMP + diphosphate + H(+). In terms of biological role, catalyzes the 2-thiolation of uridine at the wobble position (U34) of tRNA, leading to the formation of s(2)U34. The chain is tRNA-specific 2-thiouridylase MnmA from Levilactobacillus brevis (strain ATCC 367 / BCRC 12310 / CIP 105137 / JCM 1170 / LMG 11437 / NCIMB 947 / NCTC 947) (Lactobacillus brevis).